The chain runs to 433 residues: Pyroglutamylated RF-amide peptide receptor (433 aa).

The Extracellular segment spans residues 1 to 46 (MQALNITAEQFSRLLSAHNLTREQFIHRYGLRPLVYTPELPARAKV). N5 and N19 each carry an N-linked (GlcNAc...) asparagine glycan. Residues 47 to 67 (AFALAGALIFALALFGNSLVI) form a helical membrane-spanning segment. Over 68 to 81 (YVVTRSKAMRTVTN) the chain is Cytoplasmic. Residues 82–102 (IFICSLALSDLLIAFFCIPVT) traverse the membrane as a helical segment. At 103-120 (MLQNISDKWLGGAFICKM) the chain is on the extracellular side. A helical transmembrane segment spans residues 121 to 141 (VPFVQSTAVVTEILTMTCIAV). The Cytoplasmic segment spans residues 142–162 (ERHQGLVHPFKMKWQYTTRRA). Residues 163-183 (FTILGVVWLAAIIVGSPMWHV) form a helical membrane-spanning segment. The Extracellular portion of the chain corresponds to 184–212 (QRLEIKYDFLYEKEHICCLEEWASPVHQR). A helical membrane pass occupies residues 213–233 (IYSTFILVILFLLPLVVMLVL). Residues 234-271 (YSKIGYELWIKKRVGDSSALQTIHGKEMSKIARKKKRA) lie on the Cytoplasmic side of the membrane. Residues 272–292 (VIMMVTVVALFAACWAPFHVV) form a helical membrane-spanning segment. The Extracellular segment spans residues 293 to 313 (HMMVEYSNFEKEYDDVTIKMV). A helical transmembrane segment spans residues 314-334 (FAVAQTIGFFNSICNPFVYAF). The Cytoplasmic portion of the chain corresponds to 335 to 433 (MNENFKKNFL…NSTFGSGHEL (99 aa)). The segment at 356 to 389 (SSPARKPGNSGISMMQKRAKLSRPQRPVEETKGD) is disordered.

This sequence belongs to the G-protein coupled receptor 1 family. As to expression, highly expressed in the adrenal gland and at moderate levels in the eye and testis. Expressed widely in the brain with high levels in the hypothalamus and moderate levels in the amygdala, basal forebrain, cortex, medulla oblongata, midbrain and thalamus.

Its subcellular location is the cell membrane. Its function is as follows. Receptor for the orexigenic neuropeptide QRFP. The activity of this receptor is mediated by G proteins that modulate adenylate cyclase activity and intracellular calcium levels. The protein is Pyroglutamylated RF-amide peptide receptor (Qrfpr) of Rattus norvegicus (Rat).